The chain runs to 311 residues: Geranylgeranyl transferase type-2 subunit beta (311 aa).

PFTB repeat units lie at residues 54–95, 102–143, 150–191, 197–239, and 246–288; these read KERI…AMLD, KDKV…AILG, KNTA…KILN, DEEL…AIIG, and RNQL…SLLQ. Geranylgeranyl diphosphate is bound by residues 176-178 and 218-230; these read HGA and RPEK…YGWW. Residues Asp-224, Cys-226, and His-276 each coordinate Zn(2+).

The protein belongs to the protein prenyltransferase subunit beta family. Heterodimer of an alpha and a beta subunit. Zn(2+) serves as cofactor.

The catalysed reaction is geranylgeranyl diphosphate + L-cysteinyl-[protein] = S-geranylgeranyl-L-cysteinyl-[protein] + diphosphate. In terms of biological role, catalyzes the transfer of a geranyl-geranyl moiety from geranyl-geranyl pyrophosphate to proteins having the C-terminal -XCC or -XCXC, where both cysteines may become modified. This chain is Geranylgeranyl transferase type-2 subunit beta (ptb1), found in Schizosaccharomyces pombe (strain 972 / ATCC 24843) (Fission yeast).